We begin with the raw amino-acid sequence, 360 residues long: Photosystem II protein D1 2 (360 aa).

3 helical membrane passes run 29 to 46 (YIGWFGVLMIPTLLAATT), 118 to 133 (HFLTGVFCYLGREWEL), and 142 to 156 (WICLAFSAPVAAATA). His118 contacts chlorophyll a. Tyr126 contacts pheophytin a. Positions 170 and 189 each coordinate [CaMn4O5] cluster. The chain crosses the membrane as a helical span at residues 197–218 (FHMLGVAGVFGGSLFSAMHGSL). His198 contacts chlorophyll a. A quinone is bound by residues His215 and 264–265 (SF). His215 is a binding site for Fe cation. His272 lines the Fe cation pocket. A helical membrane pass occupies residues 274–288 (FLAAWPVIGIWFTAL). [CaMn4O5] cluster contacts are provided by His332, Glu333, Asp342, and Ala344. Residues 345-360 (AGEVAPVAISAPAING) constitute a propeptide that is removed on maturation.

Belongs to the reaction center PufL/M/PsbA/D family. As to quaternary structure, PSII is composed of 1 copy each of membrane proteins PsbA, PsbB, PsbC, PsbD, PsbE, PsbF, PsbH, PsbI, PsbJ, PsbK, PsbL, PsbM, PsbT, PsbX, PsbY, PsbZ, Psb30/Ycf12, peripheral proteins PsbO, CyanoQ (PsbQ), PsbU, PsbV and a large number of cofactors. It forms dimeric complexes. The D1/D2 heterodimer binds P680, chlorophylls that are the primary electron donor of PSII, and subsequent electron acceptors. It shares a non-heme iron and each subunit binds pheophytin, quinone, additional chlorophylls, carotenoids and lipids. D1 provides most of the ligands for the Mn4-Ca-O5 cluster of the oxygen-evolving complex (OEC). There is also a Cl(-1) ion associated with D1 and D2, which is required for oxygen evolution. The PSII complex binds additional chlorophylls, carotenoids and specific lipids. serves as cofactor. Tyr-161 forms a radical intermediate that is referred to as redox-active TyrZ, YZ or Y-Z. In terms of processing, C-terminally processed by CtpA; processing is essential to allow assembly of the oxygen-evolving complex and thus photosynthetic growth.

Its subcellular location is the cellular thylakoid membrane. It carries out the reaction 2 a plastoquinone + 4 hnu + 2 H2O = 2 a plastoquinol + O2. Functionally, photosystem II (PSII) is a light-driven water:plastoquinone oxidoreductase that uses light energy to abstract electrons from H(2)O, generating O(2) and a proton gradient subsequently used for ATP formation. It consists of a core antenna complex that captures photons, and an electron transfer chain that converts photonic excitation into a charge separation. The D1/D2 (PsbA/PsbD) reaction center heterodimer binds P680, the primary electron donor of PSII as well as several subsequent electron acceptors. The chain is Photosystem II protein D1 2 from Nostoc sp. (strain PCC 7120 / SAG 25.82 / UTEX 2576).